Reading from the N-terminus, the 146-residue chain is Cystatin-C (146 aa).

An N-terminal signal peptide occupies residues 1-26 (MAGPLRAPLLLLAILAVALALSPAAG). Phosphoserine is present on Ser-43. Positions 81–85 (QIVAG) match the Secondary area of contact motif. Intrachain disulfides connect Cys-99–Cys-109 and Cys-123–Cys-143.

Belongs to the cystatin family.

It is found in the secreted. In terms of biological role, as an inhibitor of cysteine proteinases, this protein is thought to serve an important physiological role as a local regulator of this enzyme activity. In Saimiri sciureus (Common squirrel monkey), this protein is Cystatin-C (CST3).